We begin with the raw amino-acid sequence, 404 residues long: Nicotinate phosphoribosyltransferase (404 aa).

His-225 is subject to Phosphohistidine; by autocatalysis.

The protein belongs to the NAPRTase family. In terms of processing, transiently phosphorylated on a His residue during the reaction cycle. Phosphorylation strongly increases the affinity for substrates and increases the rate of nicotinate D-ribonucleotide production. Dephosphorylation regenerates the low-affinity form of the enzyme, leading to product release.

The catalysed reaction is nicotinate + 5-phospho-alpha-D-ribose 1-diphosphate + ATP + H2O = nicotinate beta-D-ribonucleotide + ADP + phosphate + diphosphate. Its pathway is cofactor biosynthesis; NAD(+) biosynthesis; nicotinate D-ribonucleotide from nicotinate: step 1/1. Its function is as follows. Catalyzes the synthesis of beta-nicotinate D-ribonucleotide from nicotinate and 5-phospho-D-ribose 1-phosphate at the expense of ATP. The protein is Nicotinate phosphoribosyltransferase of Methanosarcina acetivorans (strain ATCC 35395 / DSM 2834 / JCM 12185 / C2A).